A 228-amino-acid chain; its full sequence is Urease accessory protein UreF (228 aa).

It belongs to the UreF family. In terms of assembly, ureD, UreF and UreG form a complex that acts as a GTP-hydrolysis-dependent molecular chaperone, activating the urease apoprotein by helping to assemble the nickel containing metallocenter of UreC. The UreE protein probably delivers the nickel.

Its subcellular location is the cytoplasm. In terms of biological role, required for maturation of urease via the functional incorporation of the urease nickel metallocenter. In Prochlorococcus marinus (strain MIT 9215), this protein is Urease accessory protein UreF.